We begin with the raw amino-acid sequence, 393 residues long: Triacylglycerol lipase 1 (393 aa).

The signal sequence occupies residues 1–20 (MKWLLVAVLTSLTIFSALTQ). Residue N41 is glycosylated (N-linked (GlcNAc...) asparagine). Catalysis depends on S166, which acts as the Nucleophile. N261 carries N-linked (GlcNAc...) asparagine glycosylation. Catalysis depends on charge relay system residues D334 and H363.

This sequence belongs to the AB hydrolase superfamily. Lipase family. In terms of tissue distribution, expressed in seedlings, roots, leaves, flowers and siliques. Specifically expressed in the epidermis.

Its subcellular location is the secreted. It carries out the reaction a triacylglycerol + H2O = a diacylglycerol + a fatty acid + H(+). It catalyses the reaction 1,2,3-tributanoylglycerol + H2O = dibutanoylglycerol + butanoate + H(+). The catalysed reaction is 1,2,3-trioctanoylglycerol + H2O = dioctanoylglycerol + octanoate + H(+). It functions in the pathway lipid metabolism; glycerolipid metabolism. Functionally, triacylglycerol (TAG) lipase active on triolein, trioctanoin, tributyrin and 1,3-Diolein, but not on phospho- and galactolipids. Involved but dispensable for TAG storage breakdown during seed germination. This is Triacylglycerol lipase 1 from Arabidopsis thaliana (Mouse-ear cress).